A 509-amino-acid polypeptide reads, in one-letter code: Probable cytochrome P450 513A1 (509 aa).

The helical transmembrane segment at 2 to 19 threads the bilayer; sequence NYLVGLVLIFTIFYFFLQ. C454 provides a ligand contact to heme.

The protein belongs to the cytochrome P450 family. Heme is required as a cofactor.

It localises to the membrane. This chain is Probable cytochrome P450 513A1 (cyp513A1), found in Dictyostelium discoideum (Social amoeba).